Consider the following 68-residue polypeptide: Small, acid-soluble spore protein I (68 aa).

Belongs to the SspI family.

The protein localises to the spore core. The sequence is that of Small, acid-soluble spore protein I from Halalkalibacterium halodurans (strain ATCC BAA-125 / DSM 18197 / FERM 7344 / JCM 9153 / C-125) (Bacillus halodurans).